The following is a 58-amino-acid chain: Pepsin-1 (58 aa).

The propeptide at 1-41 is activation peptide; it reads LLQVPLEKGQSAREYLQEQGLWEQYRLKYPYNPMAKFDPSF.

It belongs to the peptidase A1 family.

The chain is Pepsin-1 from Thunnus orientalis (North Pacific bluefin tuna).